Consider the following 670-residue polypeptide: ATP synthase subunit alpha 2 (670 aa).

180–187 (GDRATGKT) serves as a coordination point for ATP. Residues 525 to 670 (MPAEDAAGDI…DAEAEARHKR (146 aa)) are disordered. Residues 543 to 588 (ARGDADRDADHGANREVSREVSPEASREVSREVSREVSHEADRDAA) are compositionally biased toward basic and acidic residues. Positions 589–599 (ADAARVAGRAP) are enriched in low complexity. Residues 621–639 (ADGDRASASRPPPDARGDA) show a composition bias toward basic and acidic residues. Low complexity predominate over residues 650–661 (ADANVNADANVD).

This sequence belongs to the ATPase alpha/beta chains family. F-type ATPases have 2 components, CF(1) - the catalytic core - and CF(0) - the membrane proton channel. CF(1) has five subunits: alpha(3), beta(3), gamma(1), delta(1), epsilon(1). CF(0) has three main subunits: a(1), b(2) and c(9-12). The alpha and beta chains form an alternating ring which encloses part of the gamma chain. CF(1) is attached to CF(0) by a central stalk formed by the gamma and epsilon chains, while a peripheral stalk is formed by the delta and b chains.

Its subcellular location is the cell inner membrane. It catalyses the reaction ATP + H2O + 4 H(+)(in) = ADP + phosphate + 5 H(+)(out). In terms of biological role, produces ATP from ADP in the presence of a proton gradient across the membrane. The alpha chain is a regulatory subunit. In Burkholderia mallei (strain NCTC 10247), this protein is ATP synthase subunit alpha 2.